A 476-amino-acid polypeptide reads, in one-letter code: Glutamate--tRNA ligase 1 (476 aa).

The 'HIGH' region motif lies at 9 to 19 (PSPTGFLHIGG). Residues 238–242 (KLSKR) carry the 'KMSKS' region motif. Lys241 serves as a coordination point for ATP.

The protein belongs to the class-I aminoacyl-tRNA synthetase family. Glutamate--tRNA ligase type 1 subfamily. In terms of assembly, monomer.

It localises to the cytoplasm. The enzyme catalyses tRNA(Glu) + L-glutamate + ATP = L-glutamyl-tRNA(Glu) + AMP + diphosphate. Catalyzes the attachment of glutamate to tRNA(Glu) in a two-step reaction: glutamate is first activated by ATP to form Glu-AMP and then transferred to the acceptor end of tRNA(Glu). The polypeptide is Glutamate--tRNA ligase 1 (Bartonella bacilliformis (strain ATCC 35685 / KC583 / Herrer 020/F12,63)).